Consider the following 469-residue polypeptide: DNA-binding transcriptional regulator NtrC (469 aa).

The Response regulatory domain occupies 5–119 (IVWVVDDDSS…EAVALVERAI (115 aa)). The residue at position 54 (D54) is a 4-aspartylphosphate. The Sigma-54 factor interaction domain maps to 140–369 (IIGEAPAMQD…LENTCRWLTV (230 aa)). Residues 168 to 175 (GESGTGKE) and 231 to 240 (ADGGTLFLDE) each bind ATP. Positions 445–464 (KQEAARLLGWGRNTLTRKLK) form a DNA-binding region, H-T-H motif.

Post-translationally, phosphorylated and dephosphorylated by NtrB.

Its subcellular location is the cytoplasm. Member of the two-component regulatory system NtrB/NtrC, which controls expression of the nitrogen-regulated (ntr) genes in response to nitrogen limitation. Phosphorylated NtrC binds directly to DNA and stimulates the formation of open promoter-sigma54-RNA polymerase complexes. This chain is DNA-binding transcriptional regulator NtrC (glnG), found in Escherichia coli O157:H7.